Here is a 309-residue protein sequence, read N- to C-terminus: Methionyl-tRNA formyltransferase (309 aa).

(6S)-5,6,7,8-tetrahydrofolate is bound at residue 109–112; the sequence is SLLP.

The protein belongs to the Fmt family.

The catalysed reaction is L-methionyl-tRNA(fMet) + (6R)-10-formyltetrahydrofolate = N-formyl-L-methionyl-tRNA(fMet) + (6S)-5,6,7,8-tetrahydrofolate + H(+). In terms of biological role, attaches a formyl group to the free amino group of methionyl-tRNA(fMet). The formyl group appears to play a dual role in the initiator identity of N-formylmethionyl-tRNA by promoting its recognition by IF2 and preventing the misappropriation of this tRNA by the elongation apparatus. The polypeptide is Methionyl-tRNA formyltransferase (Clostridium perfringens (strain 13 / Type A)).